Here is a 488-residue protein sequence, read N- to C-terminus: Protein nucleotidyltransferase YdiU (488 aa).

Residues Gly91, Gly93, Arg94, Lys114, Asp126, Gly127, Arg177, and Arg184 each coordinate ATP. The interval 108–127 is disordered; the sequence is RFDIQLKGSGPTPYSRRGDG. Asp253 acts as the Proton acceptor in catalysis. Mg(2+)-binding residues include Asn254 and Asp263. Asp263 is an ATP binding site.

It belongs to the SELO family. It depends on Mg(2+) as a cofactor. Requires Mn(2+) as cofactor.

The enzyme catalyses L-seryl-[protein] + ATP = 3-O-(5'-adenylyl)-L-seryl-[protein] + diphosphate. It catalyses the reaction L-threonyl-[protein] + ATP = 3-O-(5'-adenylyl)-L-threonyl-[protein] + diphosphate. It carries out the reaction L-tyrosyl-[protein] + ATP = O-(5'-adenylyl)-L-tyrosyl-[protein] + diphosphate. The catalysed reaction is L-histidyl-[protein] + UTP = N(tele)-(5'-uridylyl)-L-histidyl-[protein] + diphosphate. The enzyme catalyses L-seryl-[protein] + UTP = O-(5'-uridylyl)-L-seryl-[protein] + diphosphate. It catalyses the reaction L-tyrosyl-[protein] + UTP = O-(5'-uridylyl)-L-tyrosyl-[protein] + diphosphate. In terms of biological role, nucleotidyltransferase involved in the post-translational modification of proteins. It can catalyze the addition of adenosine monophosphate (AMP) or uridine monophosphate (UMP) to a protein, resulting in modifications known as AMPylation and UMPylation. The chain is Protein nucleotidyltransferase YdiU from Bacillus cereus (strain AH820).